A 181-amino-acid chain; its full sequence is Adenylate kinase 2 (181 aa).

An ATP-binding site is contributed by 10–15 (GSGKST). The tract at residues 30 to 59 (SMGGILREAIANATPLGIKAKPYVERGDLL) is NMP. AMP-binding positions include Arg-36, 57–59 (DLL), 85–88 (GYPR), and Gln-92. The segment at 126 to 132 (NRSLFDD) is LID. ATP is bound at residue Arg-127. Arg-140 contacts AMP. Pro-168 is a binding site for ATP.

Belongs to the adenylate kinase family. In terms of assembly, monomer.

Its subcellular location is the cytoplasm. The enzyme catalyses AMP + ATP = 2 ADP. It functions in the pathway purine metabolism; AMP biosynthesis via salvage pathway; AMP from ADP: step 1/1. Its function is as follows. Catalyzes the reversible transfer of the terminal phosphate group between ATP and AMP. Plays an important role in cellular energy homeostasis and in adenine nucleotide metabolism. The chain is Adenylate kinase 2 from Synechocystis sp. (strain ATCC 27184 / PCC 6803 / Kazusa).